Consider the following 1555-residue polypeptide: Regulating synaptic membrane exocytosis protein 2 (1555 aa).

The interval 1–35 is disordered; sequence MSAPLGPRGRPAPTPAASQPPPQPEMPDLSHLTEE. The segment covering 10–25 has biased composition (pro residues); that stretch reads RPAPTPAASQPPPQPE. A RabBD domain is found at 26–154; sequence MPDLSHLTEE…TKSGAWFYNS (129 aa). The FYVE-type zinc finger occupies 86-142; that stretch reads KGDAPTCGICHKTKFADGCGHNCSYCQTKFCARCGGRVSLRSNKVMWVCNLCRKQQE. The Zn(2+) site is built by C92, C95, C108, C111, C116, C119, C134, and C137. Positions 154–163 are enriched in polar residues; that stretch reads SGSNTPQQPD. Residues 154 to 530 form a disordered region; sequence SGSNTPQQPD…STPEYTSCDD (377 aa). A compositionally biased stretch (basic and acidic residues) spans 170 to 185; the sequence is LRSEEAPQEKKAKLHE. Residues 259–268 are compositionally biased toward polar residues; that stretch reads YVPSDSTMPR. Composition is skewed to basic and acidic residues over residues 287–298, 317–335, 351–370, and 379–403; these read EPDHLNYRDSNR, RDEYERQRREEEYQARYRS, EQMRIHAEVSRARHERRHSD, and EDSRISLLRMDRPSRQRSVSERRAA. S369 carries the post-translational modification Phosphoserine. Residues 418–432 are compositionally biased toward polar residues; it reads AQGQSSYPQRTTNHS. Positions 444 to 461 are enriched in basic and acidic residues; that stretch reads DRPELRRADSLRKQHHLD. The span at 479–490 shows a compositional bias: polar residues; the sequence is RNDSLSSDQSES. A compositionally biased stretch (basic residues) spans 497 to 506; sequence RPHKSKKGGK. Positions 590-676 constitute a PDZ domain; that stretch reads DGSVPRDSGA…EPQVELVVSR (87 aa). T611 is subject to Phosphothreonine. The segment at 682 to 716 is disordered; the sequence is PRIPDSTHAQLESSSSSFESQKMDRPSISVTSPMS. 2 positions are modified to phosphoserine: S713 and S716. In terms of domain architecture, C2 1 spans 743–866; sequence FVPRVQIKLW…ALLDDEPHWY (124 aa). 5 disordered regions span residues 877 to 913, 935 to 1145, 1180 to 1207, 1268 to 1288, and 1307 to 1332; these read PLPHPSPYMPRRQLHGESPTRRLQRSKRISDSEVSDY, STLS…KRNS, YRSGWDPHRGADTVSTKSSDSDVSDVSA, LEKNDGSQSDTAVGALGTSGK, and KSRSASQLSQTEGGGKKLRSTVQRST. Residues 935–953 are compositionally biased toward polar residues; it reads STLSVPEQVMSSNHCSPSG. Composition is skewed to basic and acidic residues over residues 996–1014 and 1025–1071; these read RMDRHRVMDDHYSSERDSH and QTSE…ERAD. A compositionally biased stretch (low complexity) spans 1092-1114; that stretch reads ALSRSHPRTGSVQTSPSSTPVTG. S1106 is subject to Phosphoserine. 2 stretches are compositionally biased toward basic and acidic residues: residues 1128–1141 and 1180–1190; these read TLERMITEDMDSTR and YRSGWDPHRGA. 2 positions are modified to phosphoserine: S1200 and S1276. One can recognise a C2 2 domain in the interval 1401–1519; that stretch reads AMGDIQVGMM…ELSNMVIGWF (119 aa). A phosphoserine mark is found at S1540 and S1543.

As to quaternary structure, heterodimer with PCLO. Part of a ternary complex involving PCLO and EPAC2. Interacts with RAB3C, RAB3D and RAB26. Binds RAB3A and RAB3B that have been activated by GTP-binding. Interacts with TSPOAP1 and RIMBP2. Interacts with PPFIA3 and PPFIA4. Interacts via its zinc finger with the first C2 domain of UNC13A. Forms a complex consisting of UNC13A, RIMS2 and RAB3A. In terms of tissue distribution, highly expressed in hippocampus, brain cortex, cerebellum and olfactory bulb. Detected at intermediate levels in midbrain, hindbrain and spinal cord, and at low levels in testis.

The protein resides in the cell membrane. The protein localises to the synapse. It localises to the presynaptic cell membrane. Functionally, rab effector involved in exocytosis. May act as scaffold protein. Plays a role in dendrite formation by melanocytes. The chain is Regulating synaptic membrane exocytosis protein 2 (Rims2) from Rattus norvegicus (Rat).